The chain runs to 258 residues: Spindlin-2B (258 aa).

Positions 1 to 23 (MKTPNAQEAEGQQTRAAAGRATG) are enriched in low complexity. Residues 1 to 49 (MKTPNAQEAEGQQTRAAAGRATGSANMTKKKVSQKKQRGRPSSQPRRNI) form a disordered region. Residues 28 to 39 (TKKKVSQKKQRG) show a composition bias toward basic residues. Tudor-like domain stretches follow at residues 50–99 (VGCR…LELH), 129–178 (IGKA…YQLL), and 210–255 (IGKH…YDLV). Histone H3K4me3 and H3R8me2a binding regions lie at residues Glu138 and 246–248 (DFH).

This sequence belongs to the SPIN/STSY family. Interacts with C11orf84/SPINDOC. Detected in all the examined tissues with highest expression in liver, followed by heart, stomach, kidney, skeletal muscle, placenta, and pancreas.

The protein resides in the nucleus. Functionally, involved in the regulation of cell cycle progression, this activity is related to the inhibition of apoptosis following the removal of essential growth factors. Exhibits H3K4me3-binding activity. The chain is Spindlin-2B (SPIN2B) from Homo sapiens (Human).